The sequence spans 527 residues: Beta-glucosidase 19 (527 aa).

The first 21 residues, 1–21, serve as a signal peptide directing secretion; it reads MKIPLLGLLLLISLVGSPTRA. Residues glutamine 52 and histidine 155 each contribute to the a beta-D-glucoside site. Asparagine 183 is a glycosylation site (N-linked (GlcNAc...) asparagine). 200-201 contributes to the a beta-D-glucoside binding site; it reads NE. Catalysis depends on glutamate 201, which acts as the Proton donor. A disulfide bridge links cysteine 220 with cysteine 231. A beta-D-glucoside is bound by residues tyrosine 345 and glutamate 418. The Nucleophile role is filled by glutamate 418. Asparagine 462 is a glycosylation site (N-linked (GlcNAc...) asparagine). Residues tryptophan 469, 476–477, and phenylalanine 485 contribute to the a beta-D-glucoside site; that span reads EW. Asparagine 495 carries an N-linked (GlcNAc...) asparagine glycan. A Prevents secretion from ER motif is present at residues 524–527; sequence HEEL.

It belongs to the glycosyl hydrolase 1 family.

The protein localises to the endoplasmic reticulum lumen. It carries out the reaction Hydrolysis of terminal, non-reducing beta-D-glucosyl residues with release of beta-D-glucose.. The sequence is that of Beta-glucosidase 19 from Arabidopsis thaliana (Mouse-ear cress).